Here is a 148-residue protein sequence, read N- to C-terminus: 3-hydroxyacyl-[acyl-carrier-protein] dehydratase FabZ (148 aa).

The active site involves His55.

Belongs to the thioester dehydratase family. FabZ subfamily.

It is found in the cytoplasm. It catalyses the reaction a (3R)-hydroxyacyl-[ACP] = a (2E)-enoyl-[ACP] + H2O. Involved in unsaturated fatty acids biosynthesis. Catalyzes the dehydration of short chain beta-hydroxyacyl-ACPs and long chain saturated and unsaturated beta-hydroxyacyl-ACPs. The chain is 3-hydroxyacyl-[acyl-carrier-protein] dehydratase FabZ from Haemophilus influenzae (strain PittEE).